Consider the following 645-residue polypeptide: 1-deoxy-D-xylulose-5-phosphate synthase 1 (645 aa).

The segment at 1–20 (MTDTKTPTLDRVAGPADLRS) is disordered. Residues His-78 and 119-121 (AHS) each bind thiamine diphosphate. Residue Asp-150 participates in Mg(2+) binding. Thiamine diphosphate is bound by residues 151-152 (GS), Asn-179, Tyr-291, and Glu-373. Mg(2+) is bound at residue Asn-179.

Belongs to the transketolase family. DXPS subfamily. In terms of assembly, homodimer. The cofactor is Mg(2+). Thiamine diphosphate serves as cofactor.

The catalysed reaction is D-glyceraldehyde 3-phosphate + pyruvate + H(+) = 1-deoxy-D-xylulose 5-phosphate + CO2. Its pathway is metabolic intermediate biosynthesis; 1-deoxy-D-xylulose 5-phosphate biosynthesis; 1-deoxy-D-xylulose 5-phosphate from D-glyceraldehyde 3-phosphate and pyruvate: step 1/1. Catalyzes the acyloin condensation reaction between C atoms 2 and 3 of pyruvate and glyceraldehyde 3-phosphate to yield 1-deoxy-D-xylulose-5-phosphate (DXP). The protein is 1-deoxy-D-xylulose-5-phosphate synthase 1 of Roseobacter denitrificans (strain ATCC 33942 / OCh 114) (Erythrobacter sp. (strain OCh 114)).